Consider the following 184-residue polypeptide: Antigen Sm21.7 (184 aa).

One can recognise an EF-hand domain in the interval 37-72 (LDMKQVNEWIALFDVDKDQKITFEEFCRGLGLKQNE). Residues Asp50, Asp52, Asp54, Lys56, and Glu61 each contribute to the Ca(2+) site.

This is Antigen Sm21.7 (SM21.7) from Schistosoma mansoni (Blood fluke).